The sequence spans 364 residues: Growth hormone secretagogue receptor type 1 (364 aa).

The Extracellular segment spans residues 1–40 (MWNATPSEEPEPNVTLDLDWDASPGNDSLPDELLPLFPAP). N-linked (GlcNAc...) asparagine glycans are attached at residues asparagine 13 and asparagine 26. Residues 41 to 66 (LLAGVTATCVALFVVGISGNLLTMLV) traverse the membrane as a helical segment. The Cytoplasmic portion of the chain corresponds to 67–72 (VSRFRE). Residues 73–96 (LRTTTNLYLSSMAFSDLLIFLCMP) traverse the membrane as a helical segment. The Extracellular portion of the chain corresponds to 97–117 (LDLVRLWQYRPWNFGDLLCKL). A disulfide bridge connects residues cysteine 115 and cysteine 197. The chain crosses the membrane as a helical span at residues 118-139 (FQFVSESCTYATVLTITALSVE). At 140–162 (RYFAICFPLRAKVVVTKGRVKLV) the chain is on the cytoplasmic side. Residues 163–183 (ILVIWAVAFCSAGPIFVLVGV) traverse the membrane as a helical segment. Topologically, residues 184–211 (EHENGTDPRDTNECRATEFAVRSGLLTV) are extracellular. Asparagine 187 is a glycosylation site (N-linked (GlcNAc...) asparagine). Residues 212–235 (MVWVSSVFFFLPVFCLTVLYSLIG) traverse the membrane as a helical segment. Residues 236 to 263 (RKLWRRRGDAAVGASLRDQNHKQTVKML) lie on the Cytoplasmic side of the membrane. The helical transmembrane segment at 264–285 (AVVVFAFILCWLPFHVGRYLFS) threads the bilayer. Residues 286–302 (KSFEPGSLEIAQISQYC) lie on the Extracellular side of the membrane. The chain crosses the membrane as a helical span at residues 303 to 326 (NLVSFVLFYLSAAINPILYNIMSK). The Cytoplasmic segment spans residues 327-364 (KYRVAVFKLLGFESFSQRKLSTLKDESSRAWTKSSINT).

The protein belongs to the G-protein coupled receptor 1 family.

It localises to the cell membrane. In terms of biological role, receptor for ghrelin, coupled to G-alpha-11 proteins. Stimulates growth hormone secretion. Also binds other growth hormone releasing peptides (GHRP) (e.g. Met-enkephalin and GHRP-6) as well as non-peptide, low molecular weight secretagogues (e.g. L-692,429, MK-0677, adenosine). The protein is Growth hormone secretagogue receptor type 1 (Ghsr) of Rattus norvegicus (Rat).